Here is a 2458-residue protein sequence, read N- to C-terminus: Acetyl-CoA carboxylase 2 (2458 aa).

A Phosphoserine modification is found at serine 35. A disordered region spans residues 35–155 (SKSEANLIPS…SPSKEDKKQA (121 aa)). Over residues 51–60 (SDNSGETPQR) the composition is skewed to polar residues. Threonine 70 carries the phosphothreonine modification. Over residues 77–87 (ASHKGPKDAGR) the composition is skewed to basic and acidic residues. Serine 91 and serine 95 each carry phosphoserine. A compositionally biased stretch (polar residues) spans 103–146 (PLSSSDAAPSPELQANGTGTQGLEATDTNGLSSSARPQGQQAGS). Serine 169, serine 175, serine 192, serine 195, and serine 200 each carry phosphoserine. The tract at residues 174–193 (SSDEDSVAGSSRESTRKGSR) is disordered. Threonine 207 bears the Phosphothreonine mark. Serine 220 bears the Phosphoserine mark. Serine 222 is modified (phosphoserine; by AMPK). Residues 259–761 (VIEKVLIANN…DTGWLDYLIA (503 aa)) form the Biotin carboxylation domain. The region spanning 414–609 (DDLQQGKRIS…LPAAQLQIAM (196 aa)) is the ATP-grasp domain. 458 to 463 (GGGGKG) lines the ATP pocket. Serine 469 carries the phosphoserine modification. Glutamate 567, glutamate 580, and asparagine 582 together coordinate Mg(2+). The Mn(2+) site is built by glutamate 567, glutamate 580, and asparagine 582. Residue arginine 584 is part of the active site. Threonine 753 is modified (phosphothreonine). The Biotinyl-binding domain occupies 888-962 (FEKENDPTVL…EAGCVVARLE (75 aa)). Lysine 929 carries the post-translational modification N6-biotinyllysine. Phosphoserine is present on serine 1340. Threonine 1342 is subject to Phosphothreonine. 2 positions are modified to phosphoserine: serine 1360 and serine 1405. A CoA carboxyltransferase N-terminal domain is found at 1695-2025 (PYVTKDLLQA…DNHSPVPIIT (331 aa)). The tract at residues 1695-2345 (PYVTKDLLQA…EDQVKQEILQ (651 aa)) is carboxyltransferase. Residues arginine 1934, lysine 2238, and arginine 2240 each coordinate CoA. The 317-residue stretch at 2029 to 2345 (PIDREIEFLP…EDQVKQEILQ (317 aa)) folds into the CoA carboxyltransferase C-terminal domain.

Monomer, homodimer, and homotetramer. Forms filamentous polymers. Interacts with MID1IP1; interaction with MID1IP1 promotes oligomerization and increases its activity in a citrate-dependent manner. Biotin serves as cofactor. The cofactor is Mg(2+). Requires Mn(2+) as cofactor. The biotin cofactor is covalently attached to the central biotinyl-binding domain and is required for the catalytic activity. In terms of processing, phosphorylation at Ser-222 by AMPK inactivates the enzyme. Required for the maintenance of skeletal muscle lipid and glucose homeostasis. In terms of tissue distribution, widely expressed with highest levels in heart, skeletal muscle, liver, adipose tissue, mammary gland, adrenal gland and colon. Isoform 3 is expressed in skeletal muscle, adipose tissue and liver (at protein level). Isoform 3 is detected at high levels in adipose tissue with lower levels in heart, liver, skeletal muscle and testis.

It localises to the mitochondrion. The enzyme catalyses hydrogencarbonate + acetyl-CoA + ATP = malonyl-CoA + ADP + phosphate + H(+). The protein operates within lipid metabolism; malonyl-CoA biosynthesis; malonyl-CoA from acetyl-CoA: step 1/1. Its activity is regulated as follows. Activity is increased by oligomerization of the protein into filaments. The oligomerization and the activity of the enzyme are inhibited by phosphorylation at Ser-222. Inhibited by its product, malonyl-CoA. Activated by citrate. Activation by MID1IP1 is citrate-dependent. Soraphen A, inhibits the enzyme by preventing the formation of active filamentous oligomers. In terms of biological role, mitochondrial enzyme that catalyzes the carboxylation of acetyl-CoA to malonyl-CoA and plays a central role in fatty acid metabolism. Catalyzes a 2 steps reaction starting with the ATP-dependent carboxylation of the biotin carried by the biotin carboxyl carrier (BCC) domain followed by the transfer of the carboxyl group from carboxylated biotin to acetyl-CoA. Through the production of malonyl-CoA that allosterically inhibits carnitine palmitoyltransferase 1 at the mitochondria, negatively regulates fatty acid oxidation. Together with its cytosolic isozyme ACACA, which is involved in de novo fatty acid biosynthesis, promotes lipid storage. The protein is Acetyl-CoA carboxylase 2 of Homo sapiens (Human).